The chain runs to 140 residues: Cystatin-C (140 aa).

Residues Met-1–Ala-20 form the signal peptide. The short motif at Gln-75–Gly-79 is the Secondary area of contact element. 2 disulfides stabilise this stretch: Cys-93–Cys-103 and Cys-117–Cys-137.

It belongs to the cystatin family.

It is found in the secreted. Its function is as follows. As an inhibitor of cysteine proteinases, this protein is thought to serve an important physiological role as a local regulator of this enzyme activity. In Mus musculus (Mouse), this protein is Cystatin-C (Cst3).